We begin with the raw amino-acid sequence, 216 residues long: Redox-sensing transcriptional repressor Rex (216 aa).

The H-T-H motif DNA-binding region spans 16–55 (VYYRYLNVLLNANKHRVSSTELSEAVQVDSATIRRDFSYF). 90 to 95 (GVGSLG) is an NAD(+) binding site.

Belongs to the transcriptional regulatory Rex family. In terms of assembly, homodimer.

The protein resides in the cytoplasm. In terms of biological role, modulates transcription in response to changes in cellular NADH/NAD(+) redox state. In Limosilactobacillus fermentum (strain NBRC 3956 / LMG 18251) (Lactobacillus fermentum), this protein is Redox-sensing transcriptional repressor Rex.